Here is a 326-residue protein sequence, read N- to C-terminus: Apoptosis facilitator Bcl-2-like protein 14 (326 aa).

At Ser44 the chain carries Phosphoserine. A disordered region spans residues 100-147 (AEKEEDSQSSPPEICAQAQRSGVPQARPRSPKWPRSRSSMDQRLEHKA). The span at 137-147 (SSMDQRLEHKA) shows a compositional bias: basic and acidic residues. The BH3 signature appears at 211 to 225 (IVELLKYSGEQLERE). Positions 307–314 (WIQQHGGW) match the BH2 motif.

The protein belongs to the Bcl-2 family. Post-translationally, phosphorylated by MELK, leading to inhibit its pro-apoptotic function.

It localises to the cytoplasm. In terms of biological role, plays a role in apoptosis. This is Apoptosis facilitator Bcl-2-like protein 14 (BCL2L14) from Bos taurus (Bovine).